Reading from the N-terminus, the 532-residue chain is NADH-quinone oxidoreductase subunit N 2 (532 aa).

14 consecutive transmembrane segments (helical) span residues 37 to 57, 63 to 83, 107 to 127, 133 to 153, 158 to 178, 192 to 212, 241 to 261, 276 to 296, 302 to 322, 336 to 356, 367 to 387, 411 to 431, 444 to 464, and 504 to 524; these read VAPP…DLFL, RLLG…LIPL, FTLV…LLSL, LPAG…ALLP, LATL…LVGI, FFLS…FVYA, VALT…HFWV, LSVV…VVAF, VWGP…NVAA, LLAW…AAAA, VAYA…AAVV, LALG…IGLF, GLGW…YYYL, and TAIV…QTVL.

The protein belongs to the complex I subunit 2 family. NDH-1 is composed of 14 different subunits. Subunits NuoA, H, J, K, L, M, N constitute the membrane sector of the complex.

It localises to the cell membrane. The catalysed reaction is a quinone + NADH + 5 H(+)(in) = a quinol + NAD(+) + 4 H(+)(out). Its function is as follows. NDH-1 shuttles electrons from NADH, via FMN and iron-sulfur (Fe-S) centers, to quinones in the respiratory chain. The immediate electron acceptor for the enzyme in this species is believed to be a menaquinone. Couples the redox reaction to proton translocation (for every two electrons transferred, four hydrogen ions are translocated across the cytoplasmic membrane), and thus conserves the redox energy in a proton gradient. This Streptomyces griseus subsp. griseus (strain JCM 4626 / CBS 651.72 / NBRC 13350 / KCC S-0626 / ISP 5235) protein is NADH-quinone oxidoreductase subunit N 2.